A 380-amino-acid chain; its full sequence is Homoserine O-acetyltransferase (380 aa).

Residues 70–366 enclose the AB hydrolase-1 domain; sequence NAVLVFHALT…SPHGHDAFLI (297 aa). Residue Ser186 is the Nucleophile of the active site. Arg250 is a substrate binding site. Active-site residues include Asp333 and His361. Asp362 contacts substrate.

Belongs to the AB hydrolase superfamily. MetX family. In terms of assembly, homodimer.

It is found in the cytoplasm. The enzyme catalyses L-homoserine + acetyl-CoA = O-acetyl-L-homoserine + CoA. It functions in the pathway amino-acid biosynthesis; L-methionine biosynthesis via de novo pathway; O-acetyl-L-homoserine from L-homoserine: step 1/1. In terms of biological role, transfers an acetyl group from acetyl-CoA to L-homoserine, forming acetyl-L-homoserine. The polypeptide is Homoserine O-acetyltransferase (Thermus thermophilus (strain ATCC BAA-163 / DSM 7039 / HB27)).